A 205-amino-acid chain; its full sequence is Holliday junction branch migration complex subunit RuvA (205 aa).

Residues 1–64 form a domain I region; the sequence is MIGKLKGTID…EDQLKLFGFL (64 aa). A domain II region spans residues 65 to 143; it reads SALEREWFRL…AFSGEMAPSI (79 aa). The flexible linker stretch occupies residues 144 to 153; the sequence is GLKQELGEGV. The interval 153–205 is domain III; the sequence is VAAAPVADAVSALTNLGYSRDQAANAVAAALKNGGEGGDSAKLIRLGLKELSR.

Belongs to the RuvA family. In terms of assembly, homotetramer. Forms an RuvA(8)-RuvB(12)-Holliday junction (HJ) complex. HJ DNA is sandwiched between 2 RuvA tetramers; dsDNA enters through RuvA and exits via RuvB. An RuvB hexamer assembles on each DNA strand where it exits the tetramer. Each RuvB hexamer is contacted by two RuvA subunits (via domain III) on 2 adjacent RuvB subunits; this complex drives branch migration. In the full resolvosome a probable DNA-RuvA(4)-RuvB(12)-RuvC(2) complex forms which resolves the HJ.

It is found in the cytoplasm. Functionally, the RuvA-RuvB-RuvC complex processes Holliday junction (HJ) DNA during genetic recombination and DNA repair, while the RuvA-RuvB complex plays an important role in the rescue of blocked DNA replication forks via replication fork reversal (RFR). RuvA specifically binds to HJ cruciform DNA, conferring on it an open structure. The RuvB hexamer acts as an ATP-dependent pump, pulling dsDNA into and through the RuvAB complex. HJ branch migration allows RuvC to scan DNA until it finds its consensus sequence, where it cleaves and resolves the cruciform DNA. This is Holliday junction branch migration complex subunit RuvA from Rhizobium meliloti (strain 1021) (Ensifer meliloti).